Here is a 505-residue protein sequence, read N- to C-terminus: Histidine ammonia-lyase (505 aa).

Residues 141-143 constitute a cross-link (5-imidazolinone (Ala-Gly)); the sequence is ASG. Ser142 carries the post-translational modification 2,3-didehydroalanine (Ser).

This sequence belongs to the PAL/histidase family. Post-translationally, contains an active site 4-methylidene-imidazol-5-one (MIO), which is formed autocatalytically by cyclization and dehydration of residues Ala-Ser-Gly.

It localises to the cytoplasm. It catalyses the reaction L-histidine = trans-urocanate + NH4(+). The protein operates within amino-acid degradation; L-histidine degradation into L-glutamate; N-formimidoyl-L-glutamate from L-histidine: step 1/3. This Bacillus thuringiensis subsp. konkukian (strain 97-27) protein is Histidine ammonia-lyase.